The primary structure comprises 882 residues: Alanine--tRNA ligase (882 aa).

Residues His-568, His-572, Cys-670, and His-674 each coordinate Zn(2+).

Belongs to the class-II aminoacyl-tRNA synthetase family. It depends on Zn(2+) as a cofactor.

It is found in the cytoplasm. The catalysed reaction is tRNA(Ala) + L-alanine + ATP = L-alanyl-tRNA(Ala) + AMP + diphosphate. Catalyzes the attachment of alanine to tRNA(Ala) in a two-step reaction: alanine is first activated by ATP to form Ala-AMP and then transferred to the acceptor end of tRNA(Ala). Also edits incorrectly charged Ser-tRNA(Ala) and Gly-tRNA(Ala) via its editing domain. The polypeptide is Alanine--tRNA ligase (Lactobacillus johnsonii (strain CNCM I-12250 / La1 / NCC 533)).